A 471-amino-acid chain; its full sequence is Probable ribonuclease FAU-1 (471 aa).

This sequence belongs to the FAU-1 family.

Probable RNase involved in rRNA stability through maturation and/or degradation of precursor rRNAs. Binds to RNA in loop regions with AU-rich sequences. The chain is Probable ribonuclease FAU-1 from Caldivirga maquilingensis (strain ATCC 700844 / DSM 13496 / JCM 10307 / IC-167).